Here is a 123-residue protein sequence, read N- to C-terminus: Thioredoxin domain-containing protein 17 (123 aa).

The Thioredoxin domain occupies 41-123 (SWCPDCVKAE…DLVRMMFTED (83 aa)). Residues cysteine 43 and cysteine 46 each act as nucleophile in the active site. Cysteine 43 and cysteine 46 are oxidised to a cystine.

The protein belongs to the thioredoxin family.

Its subcellular location is the cytoplasm. Disulfide reductase. May participate in various redox reactions through the reversible oxidation of its active center dithiol to a disulfide and catalyze dithiol-disulfide exchange reactions. Has peroxidase activity and may contribute to the elimination of cellular hydrogen peroxide. The chain is Thioredoxin domain-containing protein 17 (txndc17) from Danio rerio (Zebrafish).